The following is a 316-amino-acid chain: 4-hydroxy-3-methylbut-2-enyl diphosphate reductase (316 aa).

Residue cysteine 12 participates in [4Fe-4S] cluster binding. Positions 41 and 74 each coordinate (2E)-4-hydroxy-3-methylbut-2-enyl diphosphate. Dimethylallyl diphosphate-binding residues include histidine 41 and histidine 74. Isopentenyl diphosphate is bound by residues histidine 41 and histidine 74. Cysteine 96 is a binding site for [4Fe-4S] cluster. A (2E)-4-hydroxy-3-methylbut-2-enyl diphosphate-binding site is contributed by histidine 124. Dimethylallyl diphosphate is bound at residue histidine 124. Histidine 124 provides a ligand contact to isopentenyl diphosphate. Glutamate 126 (proton donor) is an active-site residue. Residue threonine 169 coordinates (2E)-4-hydroxy-3-methylbut-2-enyl diphosphate. Cysteine 199 is a [4Fe-4S] cluster binding site. (2E)-4-hydroxy-3-methylbut-2-enyl diphosphate is bound by residues serine 227, serine 228, asparagine 229, and serine 271. Residues serine 227, serine 228, asparagine 229, and serine 271 each coordinate dimethylallyl diphosphate. The isopentenyl diphosphate site is built by serine 227, serine 228, asparagine 229, and serine 271.

The protein belongs to the IspH family. [4Fe-4S] cluster is required as a cofactor.

It catalyses the reaction isopentenyl diphosphate + 2 oxidized [2Fe-2S]-[ferredoxin] + H2O = (2E)-4-hydroxy-3-methylbut-2-enyl diphosphate + 2 reduced [2Fe-2S]-[ferredoxin] + 2 H(+). The catalysed reaction is dimethylallyl diphosphate + 2 oxidized [2Fe-2S]-[ferredoxin] + H2O = (2E)-4-hydroxy-3-methylbut-2-enyl diphosphate + 2 reduced [2Fe-2S]-[ferredoxin] + 2 H(+). It participates in isoprenoid biosynthesis; dimethylallyl diphosphate biosynthesis; dimethylallyl diphosphate from (2E)-4-hydroxy-3-methylbutenyl diphosphate: step 1/1. Its pathway is isoprenoid biosynthesis; isopentenyl diphosphate biosynthesis via DXP pathway; isopentenyl diphosphate from 1-deoxy-D-xylulose 5-phosphate: step 6/6. Its function is as follows. Catalyzes the conversion of 1-hydroxy-2-methyl-2-(E)-butenyl 4-diphosphate (HMBPP) into a mixture of isopentenyl diphosphate (IPP) and dimethylallyl diphosphate (DMAPP). Acts in the terminal step of the DOXP/MEP pathway for isoprenoid precursor biosynthesis. This is 4-hydroxy-3-methylbut-2-enyl diphosphate reductase from Stenotrophomonas maltophilia (strain K279a).